Reading from the N-terminus, the 396-residue chain is Polygalacturonase (396 aa).

A signal peptide spans 1–22 (MDLKFKVHFALVLLFLAHFGES). Asn143, Asn151, Asn174, Asn181, Asn203, and Asn208 each carry an N-linked (GlcNAc...) asparagine glycan. PbH1 repeat units lie at residues 172–198 (CKNL…HVSR) and 199–220 (SSSV…SVGD). The active-site Proton donor is Asp213. Cys215 and Cys232 are disulfide-bonded. His236 is a catalytic residue. PbH1 repeat units follow at residues 252–273 (VVGV…RIKT), 282–303 (VNDV…VIDQ), and 316–356 (PSQV…EVGD). Residues Asn259 and Asn294 are each glycosylated (N-linked (GlcNAc...) asparagine). Positions 364-396 (KEGPAKSSCENIKPSLKGKQNPPVCTASAASSS) are disordered. An intrachain disulfide couples Cys372 to Cys388.

It belongs to the glycosyl hydrolase 28 family. As to expression, pollen.

Its subcellular location is the secreted. The protein resides in the cell wall. It carries out the reaction (1,4-alpha-D-galacturonosyl)n+m + H2O = (1,4-alpha-D-galacturonosyl)n + (1,4-alpha-D-galacturonosyl)m.. Its function is as follows. May function in depolymerizing pectin during pollen development, germination, and tube growth. This chain is Polygalacturonase (PG1), found in Nicotiana tabacum (Common tobacco).